Here is a 558-residue protein sequence, read N- to C-terminus: Coiled-coil domain-containing protein 63 (558 aa).

The segment at 1 to 26 (MPTKKHRRKDPESPQEPSEKTKEQLV) is disordered. Basic and acidic residues predominate over residues 9-26 (KDPESPQEPSEKTKEQLV). Coiled coils occupy residues 48 to 289 (NFRS…KAKK) and 339 to 416 (VTEL…VENL). A disordered region spans residues 531-558 (HYATRESRNRDSMPEKGDELKSKKKVTV). The segment covering 533–551 (ATRESRNRDSMPEKGDELK) has biased composition (basic and acidic residues).

Its function is as follows. Plays a role in spermiogenesis. Involved in the elongation of flagella and the formation of sperm heads. This is Coiled-coil domain-containing protein 63 from Bos taurus (Bovine).